A 319-amino-acid polypeptide reads, in one-letter code: Iron-sulfur cluster transfer protein NUBPL (319 aa).

The N-terminal 38 residues, 1–38 (MGTWRRLLLFGGVSLRGGGAATVPPRGCRALGCGRQLL), are a transit peptide targeting the mitochondrion. An ATP-binding site is contributed by 75 to 82 (GKGGVGKS).

It belongs to the Mrp/NBP35 ATP-binding proteins family. It depends on [4Fe-4S] cluster as a cofactor.

The protein localises to the mitochondrion. Functionally, iron-sulfur cluster transfer protein involved in the assembly of the mitochondrial membrane respiratory chain NADH dehydrogenase (Complex I). May deliver one or more Fe-S clusters to complex I subunits. The sequence is that of Iron-sulfur cluster transfer protein NUBPL (Nubpl) from Mus musculus (Mouse).